The following is a 158-amino-acid chain: Snaclec flavocetin-A subunit alpha (158 aa).

A signal peptide spans 1 to 23 (MERLIFVSFGLLVVILSLSGTGA). 3 disulfides stabilise this stretch: Cys-27-Cys-38, Cys-55-Cys-152, and Cys-127-Cys-144. The C-type lectin domain maps to 34–153 (YDRYCYQAFS…CGTENPFVCK (120 aa)).

It belongs to the snaclec family. Tetramer of heterodimers of alpha and beta subunits (alphabeta)(4); disulfide-linked. In terms of tissue distribution, expressed by the venom gland.

It is found in the secreted. Its function is as follows. Strong platelet aggregation inhibitor. Binds specifically to platelet glycoprotein Ibalpha (GP1BA) with high affinity and inhibits vWF-dependent platelet aggregation. Has also been observed to induce small agglutinates in washed platelets by binding to GPIb. This is Snaclec flavocetin-A subunit alpha from Protobothrops flavoviridis (Habu).